The primary structure comprises 46 residues: Iota-conotoxin-like M11.1 (46 aa).

Disulfide bonds link C5-C19, C12-C22, C18-C27, and C21-C38. The residue at position 44 (M44) is a D-methionine. Residue R46 is a propeptide, removed by a carboxypeptidase.

It belongs to the conotoxin I1 superfamily. Expressed by the venom duct.

It is found in the secreted. In terms of biological role, iota-conotoxins bind to voltage-gated sodium channels (Nav) and act as agonists by shifting the voltage-dependence of activation to more hyperpolarized levels. Produces general excitatory symptoms. This Conus magus (Magical cone) protein is Iota-conotoxin-like M11.1.